We begin with the raw amino-acid sequence, 365 residues long: Peptide chain release factor 1 (365 aa).

At Q240 the chain carries N5-methylglutamine.

It belongs to the prokaryotic/mitochondrial release factor family. In terms of processing, methylated by PrmC. Methylation increases the termination efficiency of RF1.

Its subcellular location is the cytoplasm. Its function is as follows. Peptide chain release factor 1 directs the termination of translation in response to the peptide chain termination codons UAG and UAA. The protein is Peptide chain release factor 1 of Bifidobacterium animalis subsp. lactis (strain AD011).